The following is a 119-amino-acid chain: UPF0102 protein Nther_1376 (119 aa).

Belongs to the UPF0102 family.

This is UPF0102 protein Nther_1376 from Natranaerobius thermophilus (strain ATCC BAA-1301 / DSM 18059 / JW/NM-WN-LF).